The following is a 282-amino-acid chain: E3 ubiquitin-protein ligase SIAH1B (282 aa).

Residues M1–P17 show a composition bias toward polar residues. The segment at M1 to P23 is disordered. S19 bears the Phosphoserine; by ATM and ATR mark. The segment at C41–R76 adopts an RING-type zinc-finger fold. Residues V90 to C282 form an SBD region. The segment at S93 to K153 adopts an SIAH-type zinc-finger fold. 8 residues coordinate Zn(2+): C98, C105, H117, C121, C128, C135, H147, and H152.

Belongs to the SINA (Seven in absentia) family. As to quaternary structure, homodimer. In terms of processing, phosphorylated on Ser-19 by ATM and ATR. As to expression, widely expressed at low level in embryos and adults. Due to the high similarity between SIAH1A and SIAH1B, it is difficult to distinguish its own tissue specificity. Overexpressed in endothelial cells of adult lung.

Its subcellular location is the cytoplasm. It is found in the nucleus. It catalyses the reaction S-ubiquitinyl-[E2 ubiquitin-conjugating enzyme]-L-cysteine + [acceptor protein]-L-lysine = [E2 ubiquitin-conjugating enzyme]-L-cysteine + N(6)-ubiquitinyl-[acceptor protein]-L-lysine.. It participates in protein modification; protein ubiquitination. Functionally, E3 ubiquitin-protein ligase that mediates ubiquitination and subsequent proteasomal degradation of target proteins. E3 ubiquitin ligases accept ubiquitin from an E2 ubiquitin-conjugating enzyme in the form of a thioester and then directly transfers the ubiquitin to targeted substrates. Mediates E3 ubiquitin ligase activity either through direct binding to substrates or by functioning as the essential RING domain subunit of larger E3 complexes. The polypeptide is E3 ubiquitin-protein ligase SIAH1B (Siah1b) (Mus musculus (Mouse)).